The primary structure comprises 561 residues: Putative transport protein YbjL (561 aa).

5 consecutive transmembrane segments (helical) span residues 8–28 (LLNG…LCLG), 32–52 (LGSV…LLGQ), 66–86 (FMLF…SIFF), 94–114 (MLAL…GKLF), and 158–178 (NLSL…IVGA). RCK C-terminal domains follow at residues 200 to 288 (RGLD…SLRN) and 292 to 373 (VFDR…RIGF). 5 helical membrane passes run 383 to 403 (LLAF…TFQF), 406 to 426 (FSFG…LGFL), 447 to 467 (FGLM…ISNG), 475 to 495 (MLIA…LFGA), and 540 to 560 (AIAN…WPGL).

The protein belongs to the AAE transporter (TC 2.A.81) family. YbjL subfamily.

The protein localises to the cell membrane. The chain is Putative transport protein YbjL from Salmonella gallinarum (strain 287/91 / NCTC 13346).